A 1380-amino-acid polypeptide reads, in one-letter code: DNA-directed RNA polymerase subunit beta (1380 aa).

Belongs to the RNA polymerase beta chain family. In terms of assembly, the RNAP catalytic core consists of 2 alpha, 1 beta, 1 beta' and 1 omega subunit. When a sigma factor is associated with the core the holoenzyme is formed, which can initiate transcription.

It carries out the reaction RNA(n) + a ribonucleoside 5'-triphosphate = RNA(n+1) + diphosphate. Functionally, DNA-dependent RNA polymerase catalyzes the transcription of DNA into RNA using the four ribonucleoside triphosphates as substrates. In Ehrlichia ruminantium (strain Gardel), this protein is DNA-directed RNA polymerase subunit beta.